The primary structure comprises 203 residues: NADH-quinone oxidoreductase subunit C (203 aa).

Belongs to the complex I 30 kDa subunit family. In terms of assembly, NDH-1 is composed of 14 different subunits. Subunits NuoB, C, D, E, F, and G constitute the peripheral sector of the complex.

It localises to the cell inner membrane. It carries out the reaction a quinone + NADH + 5 H(+)(in) = a quinol + NAD(+) + 4 H(+)(out). Its function is as follows. NDH-1 shuttles electrons from NADH, via FMN and iron-sulfur (Fe-S) centers, to quinones in the respiratory chain. The immediate electron acceptor for the enzyme in this species is believed to be ubiquinone. Couples the redox reaction to proton translocation (for every two electrons transferred, four hydrogen ions are translocated across the cytoplasmic membrane), and thus conserves the redox energy in a proton gradient. The chain is NADH-quinone oxidoreductase subunit C from Delftia acidovorans (strain DSM 14801 / SPH-1).